A 452-amino-acid chain; its full sequence is MDHAELTTEQVLKRDIPWESYMANKLISGTCLQLLRRYDHKPESQRGPLLDEDGPSYVRVFLNILRNISKEDTVEYVLALIDEMLAVNPKRAALFYDNSLSGEDIYDPFLRLLLKGNWFVQEKSCKILTQIISARPKMQNGIVPNGEASNSKSKLTSTQDVLRGLVDWLCSQLRNPTHPNCSVPTAMHCLATLLREQYVRALFVQADGVKLLIPLISPASTQQSIQLLYETCLCIWLLSFYDAAVDYLSTTRVMPRLVEVVKGSTKEKVVRVVIMSIRNLLAKGAFAAQMIDLGLPHIVQNLKAQAWTDEDLLDALNQLEIGLKDNLKKLSSFEKYKQQVLLGHLDWSPMHKDPSFWRENINNFEENDFQILRVLMTIIDTSADTTALAVACYDLSQFLQYHPSGRIVVADLKAKDRVMKLMNHENAEVRKNALLCVQRLFLGAKYASFLQT.

Belongs to the V-ATPase H subunit family. As to quaternary structure, V-ATPase is a heteromultimeric enzyme composed of a peripheral catalytic V1 complex (components A to H) attached to an integral membrane V0 proton pore complex (components: a, c, c', c'' and d).

Subunit of the peripheral V1 complex of vacuolar ATPase. Subunit H activates the ATPase activity of the enzyme and couples ATPase activity to proton flow. Vacuolar ATPase is responsible for acidifying a variety of intracellular compartments in eukaryotic cells, thus providing most of the energy required for transport processes in the vacuolar system. This chain is Probable V-type proton ATPase subunit H, found in Oryza sativa subsp. japonica (Rice).